Here is a 398-residue protein sequence, read N- to C-terminus: Putative tyrosine-protein phosphatase C15H7.3 (398 aa).

A compositionally biased stretch (basic residues) spans 1 to 15 (MERSQKSARKKKKTS). The segment at 1–114 (MERSQKSARK…EPWSEEEPAK (114 aa)) is disordered. Residues 18–40 (GNDRSIRSERKSKQKKPAGEKSQ) are compositionally biased toward basic and acidic residues. A compositionally biased stretch (basic residues) spans 41–50 (KSRRTRKSRG). The span at 55-73 (GFTSRETIQPSSSGQSEGT) shows a compositional bias: polar residues. The span at 74–114 (TRMDDQKDEKKDDKKEEKKEERKEEKKEEVKEPWSEEEPAK) shows a compositional bias: basic and acidic residues. The Tyrosine-protein phosphatase domain occupies 125-376 (TNVGGTFKQT…GTVHRSMACW (252 aa)).

Belongs to the protein-tyrosine phosphatase family. Non-receptor class subfamily.

The catalysed reaction is O-phospho-L-tyrosyl-[protein] + H2O = L-tyrosyl-[protein] + phosphate. The polypeptide is Putative tyrosine-protein phosphatase C15H7.3 (Caenorhabditis elegans).